The sequence spans 392 residues: DNA replication and repair protein RecF (392 aa).

33–40 (GANGAGKT) contributes to the ATP binding site.

It belongs to the RecF family.

The protein localises to the cytoplasm. Its function is as follows. The RecF protein is involved in DNA metabolism; it is required for DNA replication and normal SOS inducibility. RecF binds preferentially to single-stranded, linear DNA. It also seems to bind ATP. This is DNA replication and repair protein RecF from Caulobacter sp. (strain K31).